The primary structure comprises 116 residues: DNA-binding protein Tpen_0471 (116 aa).

The protein belongs to the PDCD5 family.

The sequence is that of DNA-binding protein Tpen_0471 from Thermofilum pendens (strain DSM 2475 / Hrk 5).